Here is a 289-residue protein sequence, read N- to C-terminus: Elongation factor Ts (289 aa).

The tract at residues 80-83 (TDFV) is involved in Mg(2+) ion dislocation from EF-Tu.

Belongs to the EF-Ts family.

It is found in the cytoplasm. Associates with the EF-Tu.GDP complex and induces the exchange of GDP to GTP. It remains bound to the aminoacyl-tRNA.EF-Tu.GTP complex up to the GTP hydrolysis stage on the ribosome. The sequence is that of Elongation factor Ts from Francisella tularensis subsp. holarctica (strain LVS).